We begin with the raw amino-acid sequence, 168 residues long: Transcriptional repressor NrdR (168 aa).

A zinc finger spans residues 3–34; the sequence is CPFCQDAENKVIDSRESHEGSVIRRRRECLTC. An ATP-cone domain is found at 49–139; that stretch reads PLIVKKDGRR…VYRSFRDIAE (91 aa).

Belongs to the NrdR family. Zn(2+) is required as a cofactor.

Functionally, negatively regulates transcription of bacterial ribonucleotide reductase nrd genes and operons by binding to NrdR-boxes. This Myxococcus xanthus (strain DK1622) protein is Transcriptional repressor NrdR.